Consider the following 727-residue polypeptide: 1,4-alpha-glucan branching enzyme GlgB (727 aa).

Asp-405 functions as the Nucleophile in the catalytic mechanism. Residue Glu-458 is the Proton donor of the active site.

The protein belongs to the glycosyl hydrolase 13 family. GlgB subfamily. Monomer.

It catalyses the reaction Transfers a segment of a (1-&gt;4)-alpha-D-glucan chain to a primary hydroxy group in a similar glucan chain.. Its pathway is glycan biosynthesis; glycogen biosynthesis. In terms of biological role, catalyzes the formation of the alpha-1,6-glucosidic linkages in glycogen by scission of a 1,4-alpha-linked oligosaccharide from growing alpha-1,4-glucan chains and the subsequent attachment of the oligosaccharide to the alpha-1,6 position. The polypeptide is 1,4-alpha-glucan branching enzyme GlgB (Yersinia pseudotuberculosis serotype O:1b (strain IP 31758)).